Consider the following 324-residue polypeptide: tRNA dimethylallyltransferase (324 aa).

Residue glycine 17–threonine 24 participates in ATP binding. Threonine 19–threonine 24 lines the substrate pocket. 4 interaction with substrate tRNA regions span residues aspartate 42–leucine 45, glutamine 166–arginine 170, arginine 251–arginine 256, and lysine 284–arginine 291.

It belongs to the IPP transferase family. As to quaternary structure, monomer. Mg(2+) is required as a cofactor.

It catalyses the reaction adenosine(37) in tRNA + dimethylallyl diphosphate = N(6)-dimethylallyladenosine(37) in tRNA + diphosphate. Functionally, catalyzes the transfer of a dimethylallyl group onto the adenine at position 37 in tRNAs that read codons beginning with uridine, leading to the formation of N6-(dimethylallyl)adenosine (i(6)A). The polypeptide is tRNA dimethylallyltransferase (Burkholderia orbicola (strain MC0-3)).